The primary structure comprises 981 residues: Mediator of RNA polymerase II transcription subunit 5 (981 aa).

Belongs to the Mediator complex subunit 5 family. As to quaternary structure, component of the Mediator complex.

The protein localises to the nucleus. Its function is as follows. Component of the Mediator complex, a coactivator involved in the regulated transcription of nearly all RNA polymerase II-dependent genes. Mediator functions as a bridge to convey information from gene-specific regulatory proteins to the basal RNA polymerase II transcription machinery. Mediator is recruited to promoters by direct interactions with regulatory proteins and serves as a scaffold for the assembly of a functional preinitiation complex with RNA polymerase II and the general transcription factors. This chain is Mediator of RNA polymerase II transcription subunit 5 (NUT1), found in Scheffersomyces stipitis (strain ATCC 58785 / CBS 6054 / NBRC 10063 / NRRL Y-11545) (Yeast).